Consider the following 194-residue polypeptide: ATP-dependent Clp protease proteolytic subunit (194 aa).

The active-site Nucleophile is serine 97. The active site involves histidine 122.

Belongs to the peptidase S14 family. As to quaternary structure, fourteen ClpP subunits assemble into 2 heptameric rings which stack back to back to give a disk-like structure with a central cavity, resembling the structure of eukaryotic proteasomes.

It localises to the cytoplasm. The catalysed reaction is Hydrolysis of proteins to small peptides in the presence of ATP and magnesium. alpha-casein is the usual test substrate. In the absence of ATP, only oligopeptides shorter than five residues are hydrolyzed (such as succinyl-Leu-Tyr-|-NHMec, and Leu-Tyr-Leu-|-Tyr-Trp, in which cleavage of the -Tyr-|-Leu- and -Tyr-|-Trp bonds also occurs).. Functionally, cleaves peptides in various proteins in a process that requires ATP hydrolysis. Has a chymotrypsin-like activity. Plays a major role in the degradation of misfolded proteins. This Lactobacillus helveticus (strain DPC 4571) protein is ATP-dependent Clp protease proteolytic subunit.